The following is a 490-amino-acid chain: Probable malate:quinone oxidoreductase (490 aa).

This sequence belongs to the MQO family. It depends on FAD as a cofactor.

The catalysed reaction is (S)-malate + a quinone = a quinol + oxaloacetate. It participates in carbohydrate metabolism; tricarboxylic acid cycle; oxaloacetate from (S)-malate (quinone route): step 1/1. This Corynebacterium jeikeium (strain K411) protein is Probable malate:quinone oxidoreductase.